The sequence spans 203 residues: Ribosomal RNA small subunit methyltransferase G (203 aa).

S-adenosyl-L-methionine contacts are provided by residues G75, L80, 126–127 (VE), and R141.

Belongs to the methyltransferase superfamily. RNA methyltransferase RsmG family.

Its subcellular location is the cytoplasm. The enzyme catalyses guanosine(527) in 16S rRNA + S-adenosyl-L-methionine = N(7)-methylguanosine(527) in 16S rRNA + S-adenosyl-L-homocysteine. Specifically methylates the N7 position of guanine in position 527 of 16S rRNA. The sequence is that of Ribosomal RNA small subunit methyltransferase G from Ruthia magnifica subsp. Calyptogena magnifica.